A 154-amino-acid chain; its full sequence is Lipoprotein signal peptidase (154 aa).

2 consecutive transmembrane segments (helical) span residues G55–I75 and A85–F105. Active-site residues include D111 and D129. Residues V127–A147 form a helical membrane-spanning segment.

Belongs to the peptidase A8 family.

It localises to the cell membrane. The catalysed reaction is Release of signal peptides from bacterial membrane prolipoproteins. Hydrolyzes -Xaa-Yaa-Zaa-|-(S,diacylglyceryl)Cys-, in which Xaa is hydrophobic (preferably Leu), and Yaa (Ala or Ser) and Zaa (Gly or Ala) have small, neutral side chains.. It functions in the pathway protein modification; lipoprotein biosynthesis (signal peptide cleavage). Functionally, this protein specifically catalyzes the removal of signal peptides from prolipoproteins. The polypeptide is Lipoprotein signal peptidase (Geobacillus kaustophilus (strain HTA426)).